The primary structure comprises 467 residues: Putative ankyrin repeat protein R911 (467 aa).

14 ANK repeats span residues 38–70, 79–108, 109–138, 140–168, 170–198, 199–228, 229–258, 260–288, 289–318, 320–348, 350–378, 379–408, 410–438, and 440–467; these read IKTD…PIIV, TLNK…DIRA, GNDY…DIRA, NDYA…NIRA, NDHA…DIRS, DNDY…NIRS, DNDY…DIKS, NDYA…NIRV, NNNY…DIIA, NNFA…DIKS, NDYA…DIRV, ENDY…DIRS, NDYA…DIKA, and DDYA…AVLS.

The protein is Putative ankyrin repeat protein R911 of Acanthamoeba polyphaga mimivirus (APMV).